A 305-amino-acid chain; its full sequence is Aspartate carbamoyltransferase catalytic subunit (305 aa).

R54 and T55 together coordinate carbamoyl phosphate. K83 lines the L-aspartate pocket. Residues R104, H132, and Q135 each coordinate carbamoyl phosphate. L-aspartate is bound by residues R165 and R226. Carbamoyl phosphate is bound by residues L265 and P266.

This sequence belongs to the aspartate/ornithine carbamoyltransferase superfamily. ATCase family. In terms of assembly, heterooligomer of catalytic and regulatory chains.

It catalyses the reaction carbamoyl phosphate + L-aspartate = N-carbamoyl-L-aspartate + phosphate + H(+). It participates in pyrimidine metabolism; UMP biosynthesis via de novo pathway; (S)-dihydroorotate from bicarbonate: step 2/3. In terms of biological role, catalyzes the condensation of carbamoyl phosphate and aspartate to form carbamoyl aspartate and inorganic phosphate, the committed step in the de novo pyrimidine nucleotide biosynthesis pathway. This chain is Aspartate carbamoyltransferase catalytic subunit, found in Pyrobaculum calidifontis (strain DSM 21063 / JCM 11548 / VA1).